Consider the following 562-residue polypeptide: Urocanate hydratase (562 aa).

Residues 52-53, glutamine 130, 176-178, glutamate 196, arginine 201, 242-243, 263-267, 273-274, and tyrosine 322 each bind NAD(+); these read GG, GMG, NA, QTSAH, and YL. Residue cysteine 410 is part of the active site. Residue glycine 492 coordinates NAD(+).

It belongs to the urocanase family. Requires NAD(+) as cofactor.

It localises to the cytoplasm. It catalyses the reaction 4-imidazolone-5-propanoate = trans-urocanate + H2O. The protein operates within amino-acid degradation; L-histidine degradation into L-glutamate; N-formimidoyl-L-glutamate from L-histidine: step 2/3. In terms of biological role, catalyzes the conversion of urocanate to 4-imidazolone-5-propionate. The polypeptide is Urocanate hydratase (Klebsiella pneumoniae (strain 342)).